A 696-amino-acid chain; its full sequence is Elongation factor G (696 aa).

The tr-type G domain occupies Glu-8–Leu-290. GTP contacts are provided by residues Ala-17 to Thr-24, Asp-88 to His-92, and Asn-142 to Asp-145.

This sequence belongs to the TRAFAC class translation factor GTPase superfamily. Classic translation factor GTPase family. EF-G/EF-2 subfamily.

The protein localises to the cytoplasm. Functionally, catalyzes the GTP-dependent ribosomal translocation step during translation elongation. During this step, the ribosome changes from the pre-translocational (PRE) to the post-translocational (POST) state as the newly formed A-site-bound peptidyl-tRNA and P-site-bound deacylated tRNA move to the P and E sites, respectively. Catalyzes the coordinated movement of the two tRNA molecules, the mRNA and conformational changes in the ribosome. This is Elongation factor G from Nitrosomonas europaea (strain ATCC 19718 / CIP 103999 / KCTC 2705 / NBRC 14298).